The primary structure comprises 285 residues: PHO85 cyclin-7 (285 aa).

Residues 1–14 (MELSSPSKKTTTSP) show a composition bias toward low complexity. A disordered region spans residues 1–42 (MELSSPSKKTTTSPINIPGGNRDNLIIGPHSHSFKTDPFSSN). S69 is modified (phosphoserine).

This sequence belongs to the cyclin family. PHO80 subfamily. In terms of assembly, forms a cyclin-CDK complex with PHO85. Interacts with the substrate proteins MMR1 and YJL084C. Interacts with the CDK inhibitor (CKI) PHO81.

The protein resides in the cytoplasm. Its activity is regulated as follows. The PCL7-PHO85 cyclin-CDK is inhibited by PHO81 in low-phosphate conditions. Functionally, cyclin partner of the cyclin-dependent kinase (CDK) PHO85. Together with cyclin PCL6, controls glycogen phosphorylase and glycogen synthase activities in response to nutrient availablility. The PCL7-PHO85 cyclin-CDK holoenzyme has GLC8 kinase activity and phosphorylates and inactivates the phosphatase PP1-2 inhibitor GLC8, causing activation of PP1-2, which then dephosphorylates and activates glycogen phosphorylase. PCL7-PHO85 also phosphorylates MMR1 and YJL084C. This is PHO85 cyclin-7 (PCL7) from Saccharomyces cerevisiae (strain ATCC 204508 / S288c) (Baker's yeast).